We begin with the raw amino-acid sequence, 578 residues long: Probable acyl-activating enzyme 12, peroxisomal (578 aa).

Residues 576–578 (SRL) carry the Microbody targeting signal motif.

It belongs to the ATP-dependent AMP-binding enzyme family. Expressed at low levels in leaves.

The protein localises to the peroxisome. Its function is as follows. May act as an acid--thiol ligase that activates carboxylic acids by forming acyl-CoAs. The polypeptide is Probable acyl-activating enzyme 12, peroxisomal (AAE12) (Arabidopsis thaliana (Mouse-ear cress)).